A 129-amino-acid polypeptide reads, in one-letter code: Large ribosomal subunit protein bL17 (129 aa).

Belongs to the bacterial ribosomal protein bL17 family. Part of the 50S ribosomal subunit. Contacts protein L32.

The protein is Large ribosomal subunit protein bL17 of Pseudomonas aeruginosa (strain UCBPP-PA14).